Consider the following 215-residue polypeptide: Deoxyadenosine kinase (215 aa).

Residue 9–17 (GPIGAGKSS) coordinates ATP. Substrate-binding residues include Glu-33, Tyr-45, and Asn-56. Asp-79 functions as the Proton acceptor in the catalytic mechanism. The substrate site is built by Arg-80, Asp-85, and Glu-150.

This sequence belongs to the DCK/DGK family. As to quaternary structure, heterodimer of a deoxyadenosine (DAK) and a deoxyguanosine kinase (DGK).

It catalyses the reaction 2'-deoxyadenosine + ATP = dAMP + ADP + H(+). Functionally, DGK/DAK plays an essential role in generating the deoxyribonucleotide precursors, dGTP and dATP, for DNA metabolism. The sequence is that of Deoxyadenosine kinase from Lactobacillus acidophilus (strain ATCC 700396 / NCK56 / N2 / NCFM).